The following is a 347-amino-acid chain: CDK2-associated and cullin domain-containing protein 1 (347 aa).

Residues 1-11 (MEESMEEEEML) are compositionally biased toward acidic residues. Disordered regions lie at residues 1 to 63 (MEES…LPGG) and 320 to 347 (RGDQ…RGYR). Over residues 34–49 (QPPPAPPLPPPPPPRP) the composition is skewed to pro residues.

The protein belongs to the cullin family. As to quaternary structure, interacts with CDK2.

In terms of biological role, cell cycle associated protein capable of promoting cell proliferation through the activation of CDK2 at the G1/S phase transition. This is CDK2-associated and cullin domain-containing protein 1 (Cacul1) from Rattus norvegicus (Rat).